A 387-amino-acid polypeptide reads, in one-letter code: Phosphoglycerate kinase (387 aa).

Residues 21 to 23 (DLN), Arg36, 59 to 62 (HLGR), Arg113, and Arg146 contribute to the substrate site. Residues Lys197, Glu314, and 340-343 (GGDT) contribute to the ATP site.

It belongs to the phosphoglycerate kinase family. In terms of assembly, monomer.

The protein resides in the cytoplasm. It catalyses the reaction (2R)-3-phosphoglycerate + ATP = (2R)-3-phospho-glyceroyl phosphate + ADP. The protein operates within carbohydrate degradation; glycolysis; pyruvate from D-glyceraldehyde 3-phosphate: step 2/5. The protein is Phosphoglycerate kinase of Pseudomonas fluorescens (strain ATCC BAA-477 / NRRL B-23932 / Pf-5).